The following is a 156-amino-acid chain: Small ribosomal subunit protein uS7 (156 aa).

This sequence belongs to the universal ribosomal protein uS7 family. As to quaternary structure, part of the 30S ribosomal subunit. Contacts proteins S9 and S11.

One of the primary rRNA binding proteins, it binds directly to 16S rRNA where it nucleates assembly of the head domain of the 30S subunit. Is located at the subunit interface close to the decoding center, probably blocks exit of the E-site tRNA. This Lactobacillus johnsonii (strain CNCM I-12250 / La1 / NCC 533) protein is Small ribosomal subunit protein uS7.